The sequence spans 518 residues: uncharacterized protein (518 aa).

Belongs to the MG032/MG096/MG288 family.

This is an uncharacterized protein from Mycoplasma pneumoniae (strain ATCC 29342 / M129 / Subtype 1) (Mycoplasmoides pneumoniae).